A 457-amino-acid polypeptide reads, in one-letter code: 11S globulin seed storage protein Ana o 2.0101 (457 aa).

The signal sequence occupies residues 1–14; that stretch reads LSVCFLILFHGCLA. Residues 15 to 29 are igE-binding; sequence SRQEWQQQDECQIDR. 2 cysteine pairs are disulfide-bonded: cysteine 25/cysteine 58 and cysteine 101/cysteine 278. 2 conformational epitope; mouse monoclonal antibody (mAb) 2B5-binding regions span residues 29-37 and 31-48; these read RLDALEPDN and DALEPDNRVEYEAGTVEA. The 191-residue stretch at 30–220 folds into the Cupin type-1 1 domain; it reads LDALEPDNRV…AFQVDERLIK (191 aa). 2 binds goat polyclonal antibodies (pAbs) regions span residues 32 to 45 and 55 to 86; these read ALEPDNRVEYEAGT and QFRCAGVALVRHTIQPNGLLLPQYSNAPQLIY. The interval 34-57 is mouse monoclonal antibody (mAb) 2B5-binding; it reads EPDNRVEYEAGTVEAWDPNHEQFR. The interval 41–55 is mouse monoclonal antibody (mAb) 4H9-binding; the sequence is YEAGTVEAWDPNHEQ. The segment at 105–119 is igE-binding; the sequence is YQAPQQGRQQGQSGR. The binds goat polyclonal antibodies (pAbs) stretch occupies residues 215-239; it reads DERLIKQLKSEDNRGGIVKVKDDEL. The tract at residues 233–252 is CD4(+) T cell-reactive epitope; it reads KVKDDELRVIRPSRSQSERG. The interval 243–270 is disordered; sequence RPSRSQSERGSESEEESEDEKRRWGQRD. Basic and acidic residues predominate over residues 261–270; the sequence is DEKRRWGQRD. The tract at residues 265–289 is linear epitope; mouse monoclonal antibody (mAb) 1F5-binding; sequence RWGQRDNGIEETICTMRLKENINDP. An NGXEET; peptidase recognition motif motif is present at residues 271–276; it reads NGIEET. Residues 284–433 form the Cupin type-1 2 domain; the sequence is ENINDPARAD…AFQISREDAR (150 aa). 5 CD4(+) T cell-reactive epitope regions span residues 289–308, 297–316, 321–340, 329–348, and 377–396; these read PARADIYTPEVGRLTTLNSL, PEVGRLTTLNSLNLPILKWL, EKGVLYKNALVLPHWNLNSH, ALVLPHWNLNSHSIIYGCKG, and QNFAVVKRAREERFEWISFK. The binds goat polyclonal antibodies (pAbs), but buried in the 3D-structure model stretch occupies residues 395-416; the sequence is FKTNDRAMTSPLAGRTSVLGGM.

This sequence belongs to the 11S seed storage protein (globulins) family. Homotrimer. Hexamer. Each subunit is composed of an acidic and a basic chain derived from a single precursor and linked by a disulfide bond. Post-translationally, proteolytically processed from a single precursor to produce an acidic and a basic chain that are linked by a disulfide bond. Not glycosylated. Expressed in seed (at protein level). Expressed in the juice of the cashew apple (at protein level).

Seed storage protein. The polypeptide is 11S globulin seed storage protein Ana o 2.0101 (Anacardium occidentale (Cashew)).